The primary structure comprises 132 residues: Phosphoribosyl-AMP cyclohydrolase (132 aa).

Mg(2+) is bound at residue Asp-79. Cys-80 lines the Zn(2+) pocket. Asp-81 and Asp-83 together coordinate Mg(2+). Zn(2+)-binding residues include Cys-100 and Cys-107.

Belongs to the PRA-CH family. In terms of assembly, homodimer. Requires Mg(2+) as cofactor. Zn(2+) serves as cofactor.

The protein resides in the cytoplasm. The catalysed reaction is 1-(5-phospho-beta-D-ribosyl)-5'-AMP + H2O = 1-(5-phospho-beta-D-ribosyl)-5-[(5-phospho-beta-D-ribosylamino)methylideneamino]imidazole-4-carboxamide. Its pathway is amino-acid biosynthesis; L-histidine biosynthesis; L-histidine from 5-phospho-alpha-D-ribose 1-diphosphate: step 3/9. Its function is as follows. Catalyzes the hydrolysis of the adenine ring of phosphoribosyl-AMP. The polypeptide is Phosphoribosyl-AMP cyclohydrolase (Acidovorax ebreus (strain TPSY) (Diaphorobacter sp. (strain TPSY))).